Reading from the N-terminus, the 111-residue chain is Nucleoid-associated protein NGK_1136 (111 aa).

It belongs to the YbaB/EbfC family. As to quaternary structure, homodimer.

The protein localises to the cytoplasm. Its subcellular location is the nucleoid. Its function is as follows. Binds to DNA and alters its conformation. May be involved in regulation of gene expression, nucleoid organization and DNA protection. In Neisseria gonorrhoeae (strain NCCP11945), this protein is Nucleoid-associated protein NGK_1136.